The following is a 221-amino-acid chain: Serine/arginine-rich splicing factor 9 (221 aa).

RRM domains are found at residues 14-89 and 111-187; these read GRIY…FPRA and FRVL…PERG. Residue Lys-36 forms a Glycyl lysine isopeptide (Lys-Gly) (interchain with G-Cter in SUMO2) linkage. A compositionally biased stretch (low complexity) spans 187 to 198; sequence GTSYGCSRSRSG. A disordered region spans residues 187-221; the sequence is GTSYGCSRSRSGSRGRDSPYQSRGSPHYFSPFRPY. Residues 188–200 are interaction with SAFB1; the sequence is TSYGCSRSRSGSR. Ser-189, Ser-193, Ser-195, Ser-204, Ser-208, and Ser-211 each carry phosphoserine. Tyr-214 carries the phosphotyrosine modification. Phosphoserine is present on Ser-216.

Belongs to the splicing factor SR family. Interacts with KHDRBS3. Interacts with HABP4. Interacts with NOL3/ARC/NOP30. Interacts with NSEP1/YB-1/YB1. Interacts with SAFB/SAFB1. Interacts with SRSF6/SFRS6. Interacts with TRA2B/SFRS10. Interacts with C1QBP. May also interact with DUSP11/PIR1. Extensively phosphorylated on serine residues in the RS domain.

It localises to the nucleus. Plays a role in constitutive splicing and can modulate the selection of alternative splice sites. Represses the splicing of MAPT/Tau exon 10. The polypeptide is Serine/arginine-rich splicing factor 9 (Srsf9) (Rattus norvegicus (Rat)).